The following is a 450-amino-acid chain: Phosphoglucosamine mutase (450 aa).

S101 acts as the Phosphoserine intermediate in catalysis. Mg(2+)-binding residues include S101, D241, D243, and D245. S101 carries the post-translational modification Phosphoserine.

The protein belongs to the phosphohexose mutase family. Mg(2+) is required as a cofactor. Activated by phosphorylation.

The catalysed reaction is alpha-D-glucosamine 1-phosphate = D-glucosamine 6-phosphate. Catalyzes the conversion of glucosamine-6-phosphate to glucosamine-1-phosphate. This chain is Phosphoglucosamine mutase, found in Lysinibacillus sphaericus (strain C3-41).